Here is a 113-residue protein sequence, read N- to C-terminus: Nucleoid-associated protein RHA1_ro04210 (113 aa).

This sequence belongs to the YbaB/EbfC family. In terms of assembly, homodimer.

The protein localises to the cytoplasm. The protein resides in the nucleoid. Functionally, binds to DNA and alters its conformation. May be involved in regulation of gene expression, nucleoid organization and DNA protection. This is Nucleoid-associated protein RHA1_ro04210 from Rhodococcus jostii (strain RHA1).